The chain runs to 615 residues: TANK-binding kinase 1-binding protein 1 (615 aa).

The interval 1 to 279 (MESMFEDDIS…QDLASNQSER (279 aa)) is homodimerization. Positions 48 to 162 (YGDIKERLGG…ALVETHLRQI (115 aa)) form a coiled coil. Ser-184 is modified (phosphoserine). Residues 221–276 (VSDLERRRLEEALEAAQGEARGAQLREEQLQAECERLQGELKQLQETRAQDLASNQ) adopt a coiled-coil conformation. The interval 280–329 (DMAWVKRVGDDQVNLALAYTELTEELGRLRELSSLQGRILRTLLQEQARS) is interaction with TBK1 and IKBKE. The segment at 326-458 (QARSGGQRHS…SHHVKAGFQG (133 aa)) is disordered. The span at 345 to 365 (PQCPSPSPPARAAPPCPPCQS) shows a compositional bias: pro residues. Residues Ser-365, Ser-372, Ser-379, Ser-385, Ser-400, and Ser-415 each carry the phosphoserine modification. The segment covering 389 to 406 (PSCPSPVPQRRSPVPPSC) has biased composition (pro residues). The segment covering 416–435 (PVPPSCPAPQPRPPPPPPPG) has biased composition (pro residues). 2 positions are modified to phosphoserine: Ser-504 and Ser-534. The UBZ1-type zinc-finger motif lies at 583 to 609 (IRSCPLCQLGFPVGYPDDALIKHIDSH). Residues Cys-586, Cys-589, His-605, and His-609 each contribute to the Zn(2+) site.

In terms of assembly, homodimer. May form a heterodimer with NAP1. Interacts with TKB1 and IKBKE. Weakly interacts with DDX3X. As to quaternary structure, (Microbial infection) Interacts with vaccinia virus protein C6. In terms of tissue distribution, detected in leukocytes, lung, placenta, small intestine, liver, kidney, spleen, muscle, heart, brain and at low levels in thymus.

Its function is as follows. Adapter protein which constitutively binds TBK1 and IKBKE playing a role in antiviral innate immunity. This is TANK-binding kinase 1-binding protein 1 from Homo sapiens (Human).